The primary structure comprises 179 residues: NADH-quinone oxidoreductase subunit B (179 aa).

The [4Fe-4S] cluster site is built by cysteine 53, cysteine 54, cysteine 118, and cysteine 148.

This sequence belongs to the complex I 20 kDa subunit family. As to quaternary structure, NDH-1 is composed of 14 different subunits. Subunits NuoB, C, D, E, F, and G constitute the peripheral sector of the complex. Requires [4Fe-4S] cluster as cofactor.

It is found in the cell membrane. The catalysed reaction is a quinone + NADH + 5 H(+)(in) = a quinol + NAD(+) + 4 H(+)(out). Its function is as follows. NDH-1 shuttles electrons from NADH, via FMN and iron-sulfur (Fe-S) centers, to quinones in the respiratory chain. The immediate electron acceptor for the enzyme in this species is believed to be a menaquinone. Couples the redox reaction to proton translocation (for every two electrons transferred, four hydrogen ions are translocated across the cytoplasmic membrane), and thus conserves the redox energy in a proton gradient. This is NADH-quinone oxidoreductase subunit B from Bacillus thuringiensis (strain Al Hakam).